A 221-amino-acid chain; its full sequence is Cytidylate kinase 1 (221 aa).

Residue 7-15 (GPSASGKSS) coordinates ATP.

The protein belongs to the cytidylate kinase family. Type 1 subfamily.

Its subcellular location is the cytoplasm. The catalysed reaction is CMP + ATP = CDP + ADP. The enzyme catalyses dCMP + ATP = dCDP + ADP. The protein is Cytidylate kinase 1 of Borrelia garinii subsp. bavariensis (strain ATCC BAA-2496 / DSM 23469 / PBi) (Borreliella bavariensis).